The chain runs to 472 residues: MSRISIQDFKESLGITESYDIINAIINENPRFSEFSTLANAQDVANFGIGLLADKTLQNDFIHTLVDRIGLVVVHHKLMQNPLKIFKKGTLEYGRKIEEIFTDLTREHVYDPEKAETEVFKREIPNVKTLFHERDRQVFYKQTISDQQLKTAFTNAQKFDEFLSTIVTSIYNSAEVDEFRYTKLLIDNYFSKNLFKIVPVSVDPATGIVNTKEFLAKTRATATKMTLPMGTRDFNSMAVHTRTDMDDLYIIMDADTQAEVDVNELASAFNLNKADFIGRRILIDGFASTGLKAVMVDKDFFMLYDQVFRMESQRNAQGMYWNYYLHVWQVLSTSRFANAVAFVDSALIDGDVSQVIVTPTVGSLKSGKSLDMEAIIRTITPNVQIEDVEWSLENVGLSSAEYATVSITANENKTGAKLVSAQPLPVGGDVRVKVTVTDPKNNKDIEGEAHISIIPDFNATPIQTPVDPPSGE.

The protein belongs to the phi29 phage major capsid protein family.

It localises to the virion. Functionally, assembles to form a prolate capsid of about 45x54 nm, with a T=3, Q=5 symmetry. This is Major capsid protein (8) from Bacillus phage GA-1 (Bacteriophage GA-1).